The sequence spans 139 residues: Peptide methionine sulfoxide reductase MsrB (139 aa).

In terms of domain architecture, MsrB spans 8–130 (DREWQRELSP…NSASLQLKTQ (123 aa)). Residues cysteine 47, cysteine 50, cysteine 96, and cysteine 99 each contribute to the Zn(2+) site. Cysteine 119 serves as the catalytic Nucleophile.

The protein belongs to the MsrB Met sulfoxide reductase family. Zn(2+) is required as a cofactor.

The enzyme catalyses L-methionyl-[protein] + [thioredoxin]-disulfide + H2O = L-methionyl-(R)-S-oxide-[protein] + [thioredoxin]-dithiol. The sequence is that of Peptide methionine sulfoxide reductase MsrB from Acinetobacter baumannii (strain SDF).